Reading from the N-terminus, the 375-residue chain is DNA replication and repair protein RecF (375 aa).

G30–T37 provides a ligand contact to ATP.

The protein belongs to the RecF family.

It is found in the cytoplasm. Its function is as follows. The RecF protein is involved in DNA metabolism; it is required for DNA replication and normal SOS inducibility. RecF binds preferentially to single-stranded, linear DNA. It also seems to bind ATP. This chain is DNA replication and repair protein RecF, found in Bacillus mycoides (strain KBAB4) (Bacillus weihenstephanensis).